The chain runs to 789 residues: UPF0313 protein VC_1711 (789 aa).

One can recognise a Radical SAM core domain in the interval 363 to 642 (AYDMIKTSVN…KALLRYHDPA (280 aa)). [4Fe-4S] cluster-binding residues include Cys377, Cys381, and Cys384. The disordered stretch occupies residues 669-789 (PEKDSDLVTP…NTQRQPQRAR (121 aa)). Over residues 683-698 (KSGRHGANRFATKHTH) the composition is skewed to basic residues. Composition is skewed to polar residues over residues 716–726 (RPNSGNKSNQG), 733–763 (PTGSKPTANKPAGNQSARSEQNRGQQGQRGS), and 778–789 (RGNTQRQPQRAR).

The protein belongs to the UPF0313 family. [4Fe-4S] cluster is required as a cofactor.

The polypeptide is UPF0313 protein VC_1711 (Vibrio cholerae serotype O1 (strain ATCC 39315 / El Tor Inaba N16961)).